The primary structure comprises 1197 residues: ATP-dependent helicase/nuclease subunit A (1197 aa).

The UvrD-like helicase ATP-binding domain maps to 2–458 (RQWTKEQQAA…IDLAKNFRSR (457 aa)). 23 to 30 (AAAGSGKT) lines the ATP pocket. The UvrD-like helicase C-terminal domain maps to 485 to 774 (RAALYQGTEF…RIMSIHKSKG (290 aa)).

This sequence belongs to the helicase family. AddA subfamily. In terms of assembly, heterodimer of AddA and AddB/RexB. Requires Mg(2+) as cofactor.

It catalyses the reaction Couples ATP hydrolysis with the unwinding of duplex DNA by translocating in the 3'-5' direction.. The enzyme catalyses ATP + H2O = ADP + phosphate + H(+). Functionally, the heterodimer acts as both an ATP-dependent DNA helicase and an ATP-dependent, dual-direction single-stranded exonuclease. Recognizes the chi site generating a DNA molecule suitable for the initiation of homologous recombination. The AddA nuclease domain is required for chi fragment generation; this subunit has the helicase and 3' -&gt; 5' nuclease activities. The sequence is that of ATP-dependent helicase/nuclease subunit A from Alkaliphilus oremlandii (strain OhILAs) (Clostridium oremlandii (strain OhILAs)).